A 544-amino-acid chain; its full sequence is Chaperonin GroEL (544 aa).

Residues 29-32 (TLGP), Lys50, 86-90 (DGTTT), Gly413, 479-481 (DAA), and Asp495 each bind ATP.

This sequence belongs to the chaperonin (HSP60) family. Forms a cylinder of 14 subunits composed of two heptameric rings stacked back-to-back. Interacts with the co-chaperonin GroES.

The protein resides in the cytoplasm. The catalysed reaction is ATP + H2O + a folded polypeptide = ADP + phosphate + an unfolded polypeptide.. Together with its co-chaperonin GroES, plays an essential role in assisting protein folding. The GroEL-GroES system forms a nano-cage that allows encapsulation of the non-native substrate proteins and provides a physical environment optimized to promote and accelerate protein folding. This Borrelia duttonii (strain Ly) protein is Chaperonin GroEL.